Here is a 365-residue protein sequence, read N- to C-terminus: MFEINPVKNRIQDLSDRTAVLRGYLDYDAKKERLEEVNAELEQPDVWNEPERAQALGKERSSLEEIVTTIDQLDQGMDDVTGLLELAIEADDEETFNEAVAELDILDGKLGQLEFRRMFSGEYDSANCYLDLQAGSGGTEAQDWASMLLRMYLRWAEAKGFKTEIIEESDGDVAGLKSATIKIIGDYAFGWLRTETGVHRLVRKSPFDSGGRRHTSFSSAFVYPEVDDDIDIEINPADLRIDVYRASGAGGQHVNKTESAVRITHIPTNIVTQCQNDRSQHKNKDQAMKQLKAKLYEFEMQKKNADKQMLEDNKSDIGWGSQIRSYVLDDSRIKDLRTGVETRNTQAVLDGDLDKFIEASLKAGL.

Gln252 carries the N5-methylglutamine modification.

This sequence belongs to the prokaryotic/mitochondrial release factor family. Methylated by PrmC. Methylation increases the termination efficiency of RF2.

It localises to the cytoplasm. Its function is as follows. Peptide chain release factor 2 directs the termination of translation in response to the peptide chain termination codons UGA and UAA. The sequence is that of Peptide chain release factor 2 from Yersinia enterocolitica serotype O:8 / biotype 1B (strain NCTC 13174 / 8081).